The chain runs to 185 residues: Ribosome-recycling factor (185 aa).

Residues 141-161 (KQEKDKKISEDDLKRAEKEVQ) are disordered.

The protein belongs to the RRF family.

It localises to the cytoplasm. Responsible for the release of ribosomes from messenger RNA at the termination of protein biosynthesis. May increase the efficiency of translation by recycling ribosomes from one round of translation to another. The polypeptide is Ribosome-recycling factor (Geotalea uraniireducens (strain Rf4) (Geobacter uraniireducens)).